A 314-amino-acid polypeptide reads, in one-letter code: uncharacterized protein (314 aa).

2 disordered regions span residues 170-203 (RSSMNSQSQMSESSFPTPIDPPPRIPHPPLNPDE) and 258-314 (VGES…PKKR). The span at 171–186 (SSMNSQSQMSESSFPT) shows a compositional bias: low complexity. Positions 187-200 (PIDPPPRIPHPPLN) are enriched in pro residues. Residues 261–272 (SSRQGENTQNVH) are compositionally biased toward polar residues. A compositionally biased stretch (basic and acidic residues) spans 289–303 (RFKDDARKSNEDEHM).

This is an uncharacterized protein from Arabidopsis thaliana (Mouse-ear cress).